The chain runs to 203 residues: Holliday junction branch migration complex subunit RuvA (203 aa).

The segment at 1-61 (MIIYKYGKIM…EYTKVTYGFD (61 aa)) is domain I. Residues 62-139 (NFKELVIFED…KFMKKLTSDE (78 aa)) are domain II. The flexible linker stretch occupies residues 140-147 (AAKIKVPA). A domain III region spans residues 147-203 (ASSENENKFLDTMKMLGFKQQQIKFALDKIELNDDIETCVENAIKLISQQQHETSRV).

The protein belongs to the RuvA family. Homotetramer. Forms an RuvA(8)-RuvB(12)-Holliday junction (HJ) complex. HJ DNA is sandwiched between 2 RuvA tetramers; dsDNA enters through RuvA and exits via RuvB. An RuvB hexamer assembles on each DNA strand where it exits the tetramer. Each RuvB hexamer is contacted by two RuvA subunits (via domain III) on 2 adjacent RuvB subunits; this complex drives branch migration. In the full resolvosome a probable DNA-RuvA(4)-RuvB(12)-RuvC(2) complex forms which resolves the HJ.

It localises to the cytoplasm. The RuvA-RuvB-RuvC complex processes Holliday junction (HJ) DNA during genetic recombination and DNA repair, while the RuvA-RuvB complex plays an important role in the rescue of blocked DNA replication forks via replication fork reversal (RFR). RuvA specifically binds to HJ cruciform DNA, conferring on it an open structure. The RuvB hexamer acts as an ATP-dependent pump, pulling dsDNA into and through the RuvAB complex. HJ branch migration allows RuvC to scan DNA until it finds its consensus sequence, where it cleaves and resolves the cruciform DNA. The polypeptide is Holliday junction branch migration complex subunit RuvA (Metamycoplasma arthritidis (strain 158L3-1) (Mycoplasma arthritidis)).